The sequence spans 314 residues: MGKPEIGTTVVVDVPATTANLGPGFDCLGAALDLNNQFQLKVLEGGAERFELIIESKEGSHLRGGPDNLVYRAAQRVWREVGMQPIALEARVQLAVPPARGMGSSATAIVAGLMGANALAGEALGKEKLLELAIDIEGHPDNVVPSLLGGLCLTAQAASRRWRVVRCEWHENVQAVVAIPSIRLSTADARRAMPKQIVVPDAVSNLGSLTLLLQGLRSGNGDLITDGMHDRLHEPYRWPLIQGGSAVRKAAMDAGAWGCVISGAGPSLLALCPPDKGRAVAEAMEKSWEQEGVQTRALPLKLQSGGSRWRPKPS.

ATP is bound at residue 97-107 (PPARGMGSSAT).

Belongs to the GHMP kinase family. Homoserine kinase subfamily.

It localises to the cytoplasm. The enzyme catalyses L-homoserine + ATP = O-phospho-L-homoserine + ADP + H(+). It functions in the pathway amino-acid biosynthesis; L-threonine biosynthesis; L-threonine from L-aspartate: step 4/5. Catalyzes the ATP-dependent phosphorylation of L-homoserine to L-homoserine phosphate. This is Homoserine kinase from Synechococcus sp. (strain RCC307).